We begin with the raw amino-acid sequence, 97 residues long: MKLRPLHDRVVIRRSEEESKTAGGIVLPGSAAEKPNRGEVVAVGTGRVLDNGEVRALAVKVGDKVVFGPYSGSNTVKVDGEDLLVMAENEILAVVEG.

Belongs to the GroES chaperonin family. As to quaternary structure, heptamer of 7 subunits arranged in a ring. Interacts with the chaperonin GroEL.

The protein localises to the cytoplasm. Together with the chaperonin GroEL, plays an essential role in assisting protein folding. The GroEL-GroES system forms a nano-cage that allows encapsulation of the non-native substrate proteins and provides a physical environment optimized to promote and accelerate protein folding. GroES binds to the apical surface of the GroEL ring, thereby capping the opening of the GroEL channel. The polypeptide is Co-chaperonin GroES (Pseudomonas putida (strain ATCC 700007 / DSM 6899 / JCM 31910 / BCRC 17059 / LMG 24140 / F1)).